Here is a 340-residue protein sequence, read N- to C-terminus: Adenosine receptor A2b (340 aa).

The Extracellular portion of the chain corresponds to methionine 1–threonine 6. A helical transmembrane segment spans residues threonine 7–alanine 31. Over isoleucine 32–asparagine 41 the chain is Cytoplasmic. Residues tyrosine 42 to isoleucine 65 traverse the membrane as a helical segment. Residues serine 66–cysteine 76 are Extracellular-facing. Residues cysteine 76 and cysteine 171 are joined by a disulfide bond. Residues leucine 77–isoleucine 99 traverse the membrane as a helical segment. Topologically, residues aspartate 100–arginine 119 are cytoplasmic. A helical membrane pass occupies residues alanine 120 to tryptophan 142. Over asparagine 143–threonine 178 the chain is Extracellular. N-linked (GlcNAc...) asparagine glycosylation is found at asparagine 151 and asparagine 154. An adenosine-binding site is contributed by glutamate 174. A helical transmembrane segment spans residues methionine 179–isoleucine 203. At lysine 204 to serine 235 the chain is on the cytoplasmic side. A helical membrane pass occupies residues leucine 236–phenylalanine 259. Asparagine 254 is a binding site for adenosine. The Extracellular segment spans residues histidine 260–lysine 267. A helical transmembrane segment spans residues proline 268 to alanine 291. Adenosine contacts are provided by serine 279 and histidine 280. Residues tyrosine 292–isoleucine 340 are Cytoplasmic-facing. A lipid anchor (S-palmitoyl cysteine) is attached at cysteine 310.

The protein belongs to the G-protein coupled receptor 1 family.

It is found in the cell membrane. In terms of biological role, receptor for adenosine. The activity of this receptor is mediated by G proteins which activate adenylyl cyclase. The polypeptide is Adenosine receptor A2b (ADORA2B) (Gallus gallus (Chicken)).